We begin with the raw amino-acid sequence, 187 residues long: Putative gamma-glutamylcyclotransferase At3g02910 (187 aa).

Residue 17–20 (YGTL) participates in substrate binding. The active-site Proton acceptor is the glutamate 92.

The protein belongs to the gamma-glutamylcyclotransferase family.

Its function is as follows. Putative gamma-glutamylcyclotransferase. The sequence is that of Putative gamma-glutamylcyclotransferase At3g02910 from Arabidopsis thaliana (Mouse-ear cress).